Here is a 254-residue protein sequence, read N- to C-terminus: HTH-type transcriptional repressor DasR (254 aa).

The HTH gntR-type domain maps to 17–87; that stretch reads RTARVPKYYR…QGKGTFVAKP (71 aa). A DNA-binding region (H-T-H motif) is located at residues 47–66; sequence ERTLAAEFDTSRTTVRQALQ.

The protein localises to the cytoplasm. Binding to the target genes is abolished by GlcN6P, a central molecule in N-acetylglucosamine metabolism. Its function is as follows. Global regulator that is part of the nutrient-sensing system. In the absence of glucosamine 6-P (GlcN6P), represses the phosphotransferase system (PTS) specific for the uptake of N-acetylglucosamine (PTSNag), and genes involved in the metabolism of chitin, as well as several genes involved in development, thereby linking carbon availability to morphogenesis. Also regulates the expression of the ABC transporters DasABC and NgcEFG, which are involved in N,N'-diacetylchitobiose ((GlcNAc)2) uptake. Binds to the DNA consensus sequence 5'-ACTGGTCTAGACCACT-3'. The sequence is that of HTH-type transcriptional repressor DasR (dasR) from Streptomyces coelicolor (strain ATCC BAA-471 / A3(2) / M145).